A 234-amino-acid chain; its full sequence is Orotidine 5'-phosphate decarboxylase (234 aa).

Substrate-binding positions include Asp-11, Lys-33, 60–69, Thr-120, Arg-181, Gln-190, Gly-210, and Arg-211; that span reads DLKFHDIPNT. Lys-62 (proton donor) is an active-site residue.

It belongs to the OMP decarboxylase family. Type 1 subfamily. Homodimer.

It catalyses the reaction orotidine 5'-phosphate + H(+) = UMP + CO2. Its pathway is pyrimidine metabolism; UMP biosynthesis via de novo pathway; UMP from orotate: step 2/2. In terms of biological role, catalyzes the decarboxylation of orotidine 5'-monophosphate (OMP) to uridine 5'-monophosphate (UMP). The sequence is that of Orotidine 5'-phosphate decarboxylase from Shewanella sediminis (strain HAW-EB3).